A 1774-amino-acid polypeptide reads, in one-letter code: Receptor-mediated endocytosis protein 6 homolog (1774 aa).

A Ras-GAP domain is found at 157–396 (ELLLKLLREL…EDVVAILPQQ (240 aa)). Disordered stretches follow at residues 444–480 (IPKQ…NNRS), 517–564 (PLAN…PAPT), 661–727 (AAHS…HHHG), 784–811 (ENTL…RNFS), 869–947 (AEID…EDSA), 983–1102 (ESSF…EEQP), 1115–1142 (QEEQ…SMEQ), and 1214–1342 (RAGA…GGRS). 2 stretches are compositionally biased toward low complexity: residues 519–533 (ANGQ…SASN) and 540–557 (SSHS…AAPA). Residues 674–683 (QQERDVHENE) are compositionally biased toward basic and acidic residues. Residues 688-713 (DMVSANVSGRGTPNISGRDTPSSQVT) show a composition bias toward polar residues. The segment covering 794 to 809 (RGGDRGDRGDRDRDRN) has biased composition (basic and acidic residues). Positions 887 to 905 (PGSGGGAGVPEAGGGGGVV) are enriched in gly residues. The span at 929-944 (DPDRERLRNGSERSQE) shows a compositional bias: basic and acidic residues. Over residues 1011-1027 (MRRQTSAESSISNQSLN) the composition is skewed to polar residues. Positions 1038-1047 (LAKHHHHHQH) are enriched in basic residues. Positions 1048-1060 (RDRDRDRDRDRDH) are enriched in basic and acidic residues. Residues 1061–1076 (REHHHKSAALKKKKHQ) are compositionally biased toward basic residues. Basic and acidic residues predominate over residues 1077–1087 (EHKEHQHRDLI). Acidic residues predominate over residues 1091–1101 (DCSEDKDEEEQ). The span at 1115–1125 (QEEQQQQQQQQ) shows a compositional bias: low complexity. Residues 1246–1291 (SADKEQQPYRDRERERDRERDRERDRDRERDRDRDRDRDRDREHHS) are compositionally biased toward basic and acidic residues. Over residues 1310–1335 (SSSSKNNAIAIAAPSSINPNPSPSSA) the composition is skewed to low complexity. Residues 1516–1546 (RHRQQLLLRSEQLEQLEVRLRSEARSCQRCL) adopt a coiled-coil conformation. A VPS9 domain is found at 1635–1774 (VSRDTVLSAH…KFIKTMDYLD (140 aa)).

It belongs to the GAPVD1 family.

It localises to the membrane. In terms of biological role, acts both as a GTPase-activating protein (GAP) and a guanine nucleotide exchange factor (GEF), and participates in endocytosis. This is Receptor-mediated endocytosis protein 6 homolog from Drosophila pseudoobscura pseudoobscura (Fruit fly).